A 166-amino-acid polypeptide reads, in one-letter code: RNA polymerase sigma factor SigV (166 aa).

Positions 38–51 match the Polymerase core binding motif; the sequence is DIVQESIKKALSSV. Residues 131–150 constitute a DNA-binding region (H-T-H motif); sequence LEEIAEITGENTNTVKTRLY.

Belongs to the sigma-70 factor family. ECF subfamily. As to quaternary structure, interacts with RsiV.

In terms of biological role, sigma factors are initiation factors that promote the attachment of RNA polymerase to specific initiation sites and are then released. Positively regulates the expression of proteins involved in stress responses against bacitracin, paraquat and tellurite. In Bacillus subtilis (strain 168), this protein is RNA polymerase sigma factor SigV (sigV).